The chain runs to 268 residues: Phosphatidylglycerol--prolipoprotein diacylglyceryl transferase (268 aa).

The next 7 helical transmembrane spans lie at 27–47 (PALRWYGFTYLVGFVAAMWLL), 66–86 (LLFYGFLGVILGGRIGYVLFY), 104–124 (GGMSFHGGLIGVITAMIYITW), 130–150 (FFAVADMVAPVVPIGLGAGRI), 181–201 (PSQLYQFALEGVALFLLLYWF), 208–228 (VGAVSGMFLLGYGIFRVIVET), and 242–262 (LMTMGQILSVPMILFGLYLIL). Residue R149 coordinates a 1,2-diacyl-sn-glycero-3-phospho-(1'-sn-glycerol).

Belongs to the Lgt family.

It localises to the cell inner membrane. The catalysed reaction is L-cysteinyl-[prolipoprotein] + a 1,2-diacyl-sn-glycero-3-phospho-(1'-sn-glycerol) = an S-1,2-diacyl-sn-glyceryl-L-cysteinyl-[prolipoprotein] + sn-glycerol 1-phosphate + H(+). It participates in protein modification; lipoprotein biosynthesis (diacylglyceryl transfer). Functionally, catalyzes the transfer of the diacylglyceryl group from phosphatidylglycerol to the sulfhydryl group of the N-terminal cysteine of a prolipoprotein, the first step in the formation of mature lipoproteins. The polypeptide is Phosphatidylglycerol--prolipoprotein diacylglyceryl transferase (Shewanella oneidensis (strain ATCC 700550 / JCM 31522 / CIP 106686 / LMG 19005 / NCIMB 14063 / MR-1)).